A 562-amino-acid chain; its full sequence is Arginine--tRNA ligase (562 aa).

A 'HIGH' region motif is present at residues alanine 129–histidine 139.

The protein belongs to the class-I aminoacyl-tRNA synthetase family. In terms of assembly, monomer.

The protein resides in the cytoplasm. It carries out the reaction tRNA(Arg) + L-arginine + ATP = L-arginyl-tRNA(Arg) + AMP + diphosphate. The polypeptide is Arginine--tRNA ligase (Xanthomonas campestris pv. campestris (strain B100)).